The primary structure comprises 148 residues: SsrA-binding protein (148 aa).

A disordered region spans residues 119-148 (AKGKKQHDKRQSMKEADWKREKQRLIKHTR). Basic and acidic residues predominate over residues 127–142 (KRQSMKEADWKREKQR).

This sequence belongs to the SmpB family.

The protein resides in the cytoplasm. Functionally, required for rescue of stalled ribosomes mediated by trans-translation. Binds to transfer-messenger RNA (tmRNA), required for stable association of tmRNA with ribosomes. tmRNA and SmpB together mimic tRNA shape, replacing the anticodon stem-loop with SmpB. tmRNA is encoded by the ssrA gene; the 2 termini fold to resemble tRNA(Ala) and it encodes a 'tag peptide', a short internal open reading frame. During trans-translation Ala-aminoacylated tmRNA acts like a tRNA, entering the A-site of stalled ribosomes, displacing the stalled mRNA. The ribosome then switches to translate the ORF on the tmRNA; the nascent peptide is terminated with the 'tag peptide' encoded by the tmRNA and targeted for degradation. The ribosome is freed to recommence translation, which seems to be the essential function of trans-translation. The protein is SsrA-binding protein of Neisseria gonorrhoeae (strain ATCC 700825 / FA 1090).